A 560-amino-acid chain; its full sequence is Mitogen-activated protein kinase kinase kinase 3 (560 aa).

Residues 70-91 (KRQSSSSSDNTSDKEEVETEET) form a disordered region. The Protein kinase domain maps to 303–557 (WLKGQLLGRG…AAELLHHPFV (255 aa)). Residues 309-317 (LGRGSYASV) and lysine 331 contribute to the ATP site. Residue aspartate 426 is the Proton acceptor of the active site.

The protein belongs to the protein kinase superfamily. STE Ser/Thr protein kinase family. MAP kinase kinase kinase subfamily. As to expression, expressed at low levels in roots, stems, siliques, leaves, seedlings and flower buds.

It carries out the reaction L-seryl-[protein] + ATP = O-phospho-L-seryl-[protein] + ADP + H(+). The enzyme catalyses L-threonyl-[protein] + ATP = O-phospho-L-threonyl-[protein] + ADP + H(+). The sequence is that of Mitogen-activated protein kinase kinase kinase 3 from Arabidopsis thaliana (Mouse-ear cress).